A 409-amino-acid chain; its full sequence is Peptidase T (409 aa).

Position 78 (His78) interacts with Zn(2+). The active site involves Asp80. Asp140 lines the Zn(2+) pocket. Glu173 functions as the Proton acceptor in the catalytic mechanism. Zn(2+) contacts are provided by Glu174, Asp196, and His379.

It belongs to the peptidase M20B family. Zn(2+) serves as cofactor.

It localises to the cytoplasm. It carries out the reaction Release of the N-terminal residue from a tripeptide.. In terms of biological role, cleaves the N-terminal amino acid of tripeptides. In Salmonella dublin (strain CT_02021853), this protein is Peptidase T.